The primary structure comprises 324 residues: Methionyl-tRNA formyltransferase (324 aa).

109 to 112 (SLLP) contributes to the (6S)-5,6,7,8-tetrahydrofolate binding site. The segment at 305 to 324 (LHPGESFHKATQDNQGASET) is disordered.

This sequence belongs to the Fmt family.

The enzyme catalyses L-methionyl-tRNA(fMet) + (6R)-10-formyltetrahydrofolate = N-formyl-L-methionyl-tRNA(fMet) + (6S)-5,6,7,8-tetrahydrofolate + H(+). In terms of biological role, attaches a formyl group to the free amino group of methionyl-tRNA(fMet). The formyl group appears to play a dual role in the initiator identity of N-formylmethionyl-tRNA by promoting its recognition by IF2 and preventing the misappropriation of this tRNA by the elongation apparatus. This is Methionyl-tRNA formyltransferase from Nitrosomonas europaea (strain ATCC 19718 / CIP 103999 / KCTC 2705 / NBRC 14298).